Consider the following 395-residue polypeptide: Probable L-tyrosine/L-aspartate decarboxylase (395 aa).

Lys-242 carries the N6-(pyridoxal phosphate)lysine modification.

Belongs to the group II decarboxylase family. MfnA subfamily. Requires pyridoxal 5'-phosphate as cofactor.

It carries out the reaction L-tyrosine + H(+) = tyramine + CO2. It catalyses the reaction L-aspartate + H(+) = beta-alanine + CO2. Its pathway is cofactor biosynthesis; methanofuran biosynthesis. The protein operates within cofactor biosynthesis; coenzyme A biosynthesis. Its function is as follows. Catalyzes the decarboxylation of L-tyrosine to produce tyramine for methanofuran biosynthesis. Can also catalyze the decarboxylation of L-aspartate to produce beta-alanine for coenzyme A (CoA) biosynthesis. In Methanosarcina barkeri (strain Fusaro / DSM 804), this protein is Probable L-tyrosine/L-aspartate decarboxylase.